The chain runs to 113 residues: Nucleoid-associated protein SAV_4556 (113 aa).

The protein belongs to the YbaB/EbfC family. As to quaternary structure, homodimer.

The protein resides in the cytoplasm. It localises to the nucleoid. Its function is as follows. Binds to DNA and alters its conformation. May be involved in regulation of gene expression, nucleoid organization and DNA protection. The chain is Nucleoid-associated protein SAV_4556 from Streptomyces avermitilis (strain ATCC 31267 / DSM 46492 / JCM 5070 / NBRC 14893 / NCIMB 12804 / NRRL 8165 / MA-4680).